The sequence spans 462 residues: cAMP-dependent protein kinase regulatory subunit (462 aa).

The dimerization and phosphorylation stretch occupies residues 54–203; sequence TPSPRFPPSP…RLKYAIEGNF (150 aa). The interval 79 to 157 is disordered; it reads FGANANPFGG…PTTDSYPAQY (79 aa). The span at 80–102 shows a compositional bias: low complexity; it reads GANANPFGGSSSNPNPFGGSASP. S164 is subject to Phosphoserine. Residues 204 to 333, E282, R291, 336 to 453, E401, and R410 contribute to the 3',5'-cyclic AMP site; these read LFSH…FLEE and ILSS…KTGV.

This sequence belongs to the cAMP-dependent kinase regulatory chain family. As to quaternary structure, tetramer, composed of 2 regulatory (R) and 2 catalytic (C) subunits. In the presence of cAMP it dissociates into 2 active monomeric C subunits and an R dimer.

This Hypocrea atroviridis (Trichoderma atroviride) protein is cAMP-dependent protein kinase regulatory subunit (pkar1).